Here is an 830-residue protein sequence, read N- to C-terminus: MAEPSQAPNPVPAAQPRPLHSPAPAPTSTPAPSPASASTPAPTPAPAPAPAAAPAGSTGSGGAGVGSGGDPARPGLSQQQRASQRKAQVRGLPRAKKLEKLGVFSACKANETCKCNGWKNPKPPTAPRMDLQQPAANLSELCRSCEHPLADHVSHLENVSEDEINRLLGMVVDVENLFMSVHKEEDTDTKQVYFYLFKLLRKCILQMTRPVVEGSLGSPPFEKPNIEQGVLNFVQYKFSHLAPRERQTMFELSKMFLLCLNYWKLETPAQFRQRSQSEDVATYKVNYTRWLCYCHVPQSCDSLPRYETTHVFGRSLLRSIFTVTRRQLLEKFRVEKDKLVPEKRTLILTHFPKFLSMLEEEIYGANSPIWESGFTMPPSEGTQLVPRPATVSATVVPSFSPSMGGGSNSSLSLDSAGTEPMPAGEKRKLPENLTLEDAKRLRVMGDIPMELVNEVMLTITDPAAMLGPETSLLSANAARDETARLEERRGIIEFHVIGNSLTPKANRRVLLWLVGLQNVFSHQLPRMPKEYIARLVFDPKHKTLALIKDGRVIGGICFRMFPTQGFTEIVFCAVTSNEQVKGYGTHLMNHLKEYHIKHSILYFLTYADEYAIGYFKKQGFSKDIKVPKSRYLGYIKDYEGATLMECELNPRIPYTELSHIIKKQKEIIKKLIERKQAQIRKVYPGLSCFKEGVRQIPVESVPGIRETGWKPLGKEKGKELKDPDQLYTTLKNLLAQIKSHPSAWPFMEPVKKSEAPDYYEVIRFPIDLKTMTERLRSRYYVTRKLFVADLQRVIANCREYNPPDSEYCRCASALEKFFYFKLKEGGLIDK.

The disordered stretch occupies residues methionine 1–arginine 94. Alanine 2 bears the N-acetylalanine mark. Pro residues-rich tracts occupy residues alanine 7–serine 33 and alanine 41–alanine 51. Gly residues predominate over residues threonine 58–glycine 69. A compositionally biased stretch (basic residues) spans serine 83 to arginine 94. The residue at position 302 (serine 302) is a Phosphoserine. Residues serine 398 to glycine 417 are compositionally biased toward low complexity. Residues serine 398–lysine 426 are disordered. Residues valine 496 to asparagine 649 form the N-acetyltransferase domain. Residue lysine 542 is modified to N6-acetyllysine. Glutamate 568 serves as the catalytic Proton donor/acceptor. Acetyl-CoA contacts are provided by residues cysteine 572–valine 574, glutamine 579–threonine 585, and tyrosine 610. Succinyl-CoA-binding positions include cysteine 572 to valine 574, glutamine 579 to threonine 585, and tyrosine 610. Lysine 721 participates in a covalent cross-link: Glycyl lysine isopeptide (Lys-Gly) (interchain with G-Cter in SUMO2). The Bromo domain occupies lysine 721–glycine 825. At threonine 728 the chain carries Phosphothreonine. Glycyl lysine isopeptide (Lys-Gly) (interchain with G-Cter in SUMO2) cross-links involve residues lysine 752 and lysine 784.

It belongs to the acetyltransferase family. GCN5 subfamily. In terms of assembly, interacts with EP300, CREBBP and ADA2. Component of the TFTC-HAT complex, at least composed of TAF5L, TAF6L, TAF3, TADA3L, SUPT3H/SPT3, TAF2/TAFII150, TAF4/TAFII135, TAF5/TAFII100, KAT2A/GCN5L2, TAF10 and TRRAP. Component of the STAGA transcription coactivator-HAT complex, at least composed of SUPT3H, KAT2A, SUPT7L, TAF5L, TAF6L, TADA3L, TAD1L, TAF10, TAF12, TRRAP and TAF9. The STAGA core complex is associated with a subcomplex required for histone deubiquitination composed of ATXN7L3, ENY2 and USP22. Component of the ADA2A-containing complex (ATAC), composed of KAT14, KAT2A, TADA2L, TADA3L, ZZ3, MBIP, WDR5, YEATS2, CCDC101 and DR1. In the complex, it probably interacts directly with KAT14, MBIP and WDR5. Interacts with PML. Interacts with CEBPB. Interacts with TACC1, TACC2 and TACC3. Interacts with RELA. Interacts with NFATC2. Interacts with TBX5. Interacts with PLK4. Associates with the 2-oxoglutarate dehydrogenase complex. Interacts with XPC; leading to KAT2A recruitment to promoters and subsequent acetylation of histones. Interacts with ERCC3/XPB; leading to KAT2A recruitment to promoters and subsequent acetylation of histones. Interacts with ISL1. Interactions of ISL1 with MLIP1 or KAT2A may be mutually exclusive. In terms of processing, acetylated at Lys-542, inhibiting the protein acetyltransferase activity. Deacetylation at Lys-542 by SIRT6 promotes phosphorylation at Ser-302 and Thr-728 and subsequent activation of the protein acetyltransferase activity, leading to acetylation and inactivation of PPARGC1A. As to expression, in brain, highly expressed in the hippocampal CA1 region (at protein level). Also expressed in the hippocampal subregions CA3 and the dentate gyrus as well as in the cortex and prefrontal cortex. Expressed at low level in the cerebellum.

It is found in the nucleus. The protein resides in the chromosome. It localises to the cytoplasm. The protein localises to the cytoskeleton. Its subcellular location is the microtubule organizing center. It is found in the centrosome. The catalysed reaction is L-lysyl-[histone] + acetyl-CoA = N(6)-acetyl-L-lysyl-[histone] + CoA + H(+). It catalyses the reaction L-lysyl-[protein] + acetyl-CoA = N(6)-acetyl-L-lysyl-[protein] + CoA + H(+). The enzyme catalyses succinyl-CoA + L-lysyl-[protein] = N(6)-succinyl-L-lysyl-[protein] + CoA + H(+). It carries out the reaction glutaryl-CoA + L-lysyl-[protein] = N(6)-glutaryl-L-lysyl-[protein] + CoA + H(+). Its function is as follows. Protein lysine acyltransferase that can act as a acetyltransferase, glutaryltransferase, succinyltransferase or malonyltransferase, depending on the context. Acts as a histone lysine succinyltransferase: catalyzes succinylation of histone H3 on 'Lys-79' (H3K79succ), with a maximum frequency around the transcription start sites of genes. Succinylation of histones gives a specific tag for epigenetic transcription activation. Association with the 2-oxoglutarate dehydrogenase complex, which provides succinyl-CoA, is required for histone succinylation. In different complexes, functions either as an acetyltransferase (HAT) or as a succinyltransferase: in the SAGA and ATAC complexes, acts as a histone acetyltransferase. Has significant histone acetyltransferase activity with core histones, but not with nucleosome core particles. Has a a strong preference for acetylation of H3 at 'Lys-9' (H3K9ac). Acetylation of histones gives a specific tag for epigenetic transcription activation. Recruited by the XPC complex at promoters, where it specifically mediates acetylation of histone variant H2A.Z.1/H2A.Z, thereby promoting expression of target genes. Involved in long-term memory consolidation and synaptic plasticity: acts by promoting expression of a hippocampal gene expression network linked to neuroactive receptor signaling. Acts as a positive regulator of T-cell activation: upon TCR stimulation, recruited to the IL2 promoter following interaction with NFATC2 and catalyzes acetylation of histone H3 at 'Lys-9' (H3K9ac), leading to promote IL2 expression. Required for growth and differentiation of craniofacial cartilage and bone by regulating acetylation of histone H3 at 'Lys-9' (H3K9ac). Regulates embryonic stem cell (ESC) pluripotency and differentiation. Also acetylates non-histone proteins, such as CEBPB, MRE11, PPARGC1A, PLK4 and TBX5. Involved in heart and limb development by mediating acetylation of TBX5, acetylation regulating nucleocytoplasmic shuttling of TBX5. Acts as a negative regulator of centrosome amplification by mediating acetylation of PLK4. Acts as a negative regulator of gluconeogenesis by mediating acetylation and subsequent inactivation of PPARGC1A. Also acts as a histone glutaryltransferase: catalyzes glutarylation of histone H4 on 'Lys-91' (H4K91glu), a mark that destabilizes nucleosomes by promoting dissociation of the H2A-H2B dimers from nucleosomes. The chain is Histone acetyltransferase KAT2A from Mus musculus (Mouse).